The primary structure comprises 325 residues: HTH-type transcriptional regulator BbuR (325 aa).

One can recognise an HTH lysR-type domain in the interval 15–72 (LDTDLLNVFCWVAKTQSFSRAAAELGTSQPVITRKIGRLEECLGVALFVRSNRGCVLT). The segment at residues 32–51 (FSRAAAELGTSQPVITRKIG) is a DNA-binding region (H-T-H motif).

The protein belongs to the LysR transcriptional regulatory family.

The protein is HTH-type transcriptional regulator BbuR (bbuR) of Bordetella bronchiseptica (strain ATCC BAA-588 / NCTC 13252 / RB50) (Alcaligenes bronchisepticus).